Reading from the N-terminus, the 367-residue chain is Peptide chain release factor 2 (367 aa).

N5-methylglutamine is present on Gln-254.

The protein belongs to the prokaryotic/mitochondrial release factor family. Methylated by PrmC. Methylation increases the termination efficiency of RF2.

It localises to the cytoplasm. Peptide chain release factor 2 directs the termination of translation in response to the peptide chain termination codons UGA and UAA. This is Peptide chain release factor 2 from Janthinobacterium sp. (strain Marseille) (Minibacterium massiliensis).